The primary structure comprises 90 residues: Small ribosomal subunit protein bS16 (90 aa).

This sequence belongs to the bacterial ribosomal protein bS16 family.

The polypeptide is Small ribosomal subunit protein bS16 (Lactococcus lactis subsp. cremoris (strain SK11)).